The sequence spans 328 residues: Olfactory receptor 4A16 (328 aa).

Residues 1-23 (MRPSSNVTEFVLLGLTQDPDVKK) lie on the Extracellular side of the membrane. Residue Asn-6 is glycosylated (N-linked (GlcNAc...) asparagine). The chain crosses the membrane as a helical span at residues 24 to 47 (TLFVMFLLIYIVTMVGNLLIWVTT). Over 48 to 55 (IGSPSLGS) the chain is Cytoplasmic. Residues 56-77 (LMYFFLAYLSLMDAIYSTAMSP) form a helical membrane-spanning segment. Topologically, residues 78–98 (KLMIDLLCDKIAISLSACMGQ) are extracellular. Cysteines 95 and 187 form a disulfide. The helical transmembrane segment at 99–118 (LFIEHLLGGAEVFLLVVMAY) threads the bilayer. Over 119 to 137 (DRYVAISKPLHYLNIMNRL) the chain is Cytoplasmic. A helical transmembrane segment spans residues 138 to 156 (VCILLLVVAMIGGFVHSVV). The Extracellular segment spans residues 157–193 (QIVFLYSLPICGPNVIDHSVCDMYPLLELLCLDTYFI). A helical membrane pass occupies residues 194 to 217 (GLTVVANGGIICMVIFTFLLISCG). Residues 218 to 233 (VILNFLKTYSQEERHK) are Cytoplasmic-facing. A helical membrane pass occupies residues 234–256 (ALPTCISHIIVVALVFVPCIFMY). Residues 257–267 (VRPVSNFPFDK) are Extracellular-facing. A helical membrane pass occupies residues 268–287 (LMTVFYSIITLMLNPLIYSL). The Cytoplasmic segment spans residues 288–328 (RQSEMKNAMKNLWCEKLSIVRKRVSPTLNIFIPSSKATNRR).

The protein belongs to the G-protein coupled receptor 1 family.

It is found in the cell membrane. Its function is as follows. Odorant receptor. The sequence is that of Olfactory receptor 4A16 (OR4A16) from Homo sapiens (Human).